The following is a 291-amino-acid chain: Serine hydrolase BPHL (291 aa).

Residues 1-37 (MVAVLGGRGVLRLRLLLSALKPGIHVPRAGPAAAFGT) form the signal peptide. An AB hydrolase-1 domain is found at 62–181 (AVLLLPGMLG…DSMIYEGIRD (120 aa)). An N6-acetyllysine mark is found at lysine 86 and lysine 119. N6-acetyllysine; alternate is present on lysine 126. The residue at position 126 (lysine 126) is an N6-succinyllysine; alternate. Serine 139 functions as the Nucleophile in the catalytic mechanism. Residue lysine 184 is modified to N6-succinyllysine. Lysine 191 bears the N6-acetyllysine; alternate mark. Lysine 191 carries the post-translational modification N6-succinyllysine; alternate. Position 217 is an N6-acetyllysine (lysine 217). Aspartate 221 is a binding site for Mg(2+). Position 243 is an N6-acetyllysine (lysine 243). Catalysis depends on aspartate 244, which acts as the Charge relay system. N6-acetyllysine; alternate is present on residues lysine 260 and lysine 271. 2 positions are modified to N6-succinyllysine; alternate: lysine 260 and lysine 271. Residue histidine 272 is the Charge relay system of the active site.

Belongs to the AB hydrolase superfamily. Lipase family. As to quaternary structure, monomer. May also form homodimers. As to expression, expressed at high levels in liver and kidney and lower levels in heart, intestine and skeletal muscle.

It is found in the mitochondrion. It catalyses the reaction L-homocysteine thiolactone + H2O = L-homocysteine + H(+). The enzyme catalyses valacyclovir + H2O = acyclovir + L-valine + H(+). In terms of biological role, specific alpha-amino acid ester serine hydrolase that prefers small, hydrophobic, and aromatic side chains and does not have a stringent requirement for the leaving group other than preferring a primary alcohol. Has homocysteine-thiolactonase activity (in vitro) and may play a significant role in the detoxification of homocysteine thiolactone in vivo. Catalyzes the hydrolytic activation of amino acid ester prodrugs of nucleoside analogs such as valacyclovir and valganciclovir, converting them into their active forms (acyclovir and ganciclovir). This Homo sapiens (Human) protein is Serine hydrolase BPHL (BPHL).